A 361-amino-acid chain; its full sequence is Phosphoserine aminotransferase (361 aa).

L-glutamate-binding residues include Ser-9 and Arg-42. Residues 76–77, Trp-103, Thr-153, Asp-173, and Gln-196 contribute to the pyridoxal 5'-phosphate site; that span reads AR. Lys-197 is subject to N6-(pyridoxal phosphate)lysine. 238–239 contacts pyridoxal 5'-phosphate; the sequence is NT.

Belongs to the class-V pyridoxal-phosphate-dependent aminotransferase family. SerC subfamily. As to quaternary structure, homodimer. Requires pyridoxal 5'-phosphate as cofactor.

Its subcellular location is the cytoplasm. It catalyses the reaction O-phospho-L-serine + 2-oxoglutarate = 3-phosphooxypyruvate + L-glutamate. The catalysed reaction is 4-(phosphooxy)-L-threonine + 2-oxoglutarate = (R)-3-hydroxy-2-oxo-4-phosphooxybutanoate + L-glutamate. Its pathway is amino-acid biosynthesis; L-serine biosynthesis; L-serine from 3-phospho-D-glycerate: step 2/3. It participates in cofactor biosynthesis; pyridoxine 5'-phosphate biosynthesis; pyridoxine 5'-phosphate from D-erythrose 4-phosphate: step 3/5. Its function is as follows. Catalyzes the reversible conversion of 3-phosphohydroxypyruvate to phosphoserine and of 3-hydroxy-2-oxo-4-phosphonooxybutanoate to phosphohydroxythreonine. The sequence is that of Phosphoserine aminotransferase from Wigglesworthia glossinidia brevipalpis.